The sequence spans 388 residues: MSLLYGLLILAFTRSCLVVGQCSINIPDDLKGEEAPVILVKTGNNVKLFRPEEKTTTFPKGTELLLACTGEGNGLKSNGQETTTLSCNGNQFESAAKEKLKDMSCKSMAKAVVEQTTKRCMGNDFNLYEAGYKVNGKFYGSVYDICYNGKGQSSGYTHNFIYGRTWKYKLPEKPYEHYSSRDPQAGKDLDKLYKEQKERFKNTKVNGKPLLDDEHYFTEGQLTPDTSIITGADKLSTYDYANIAPLFKDIYDGNIWRYENMTQELADQRQATFEEYTGGFYSYEVEKWKPIGLDNAEFPTHRVPKYIYKLVVDTESKDGIVFVTLNDPYHKSPASENLCKDICSEANINEPDFKNVEKGYTICCSYGDFGNRIRTLPKDIHVKGLLKY.

A signal peptide spans methionine 1–valine 18. An N-linked (GlcNAc...) asparagine glycan is attached at asparagine 260.

The protein belongs to the DNA/RNA non-specific endonuclease family. The cofactor is a divalent metal cation. Saliva (at protein level).

It localises to the secreted. Functionally, binds double-stranded DNA (dsDNA) with high affinity. Binds double-stranded RNA. Binds single-stranded DNA with lower affinity and with a preference for purine-rich sequences. Shows residual nuclease activity for dsDNA. Facilitates blood meal intake by lowering the local viscosity created by the release of host DNA. The polypeptide is Salivary protein Tsal2A (Glossina morsitans morsitans (Savannah tsetse fly)).